Reading from the N-terminus, the 285-residue chain is Acetylglutamate kinase (285 aa).

Residues 63–64 (GG), Arg85, and Asn178 contribute to the substrate site.

This sequence belongs to the acetylglutamate kinase family. ArgB subfamily.

It is found in the cytoplasm. The enzyme catalyses N-acetyl-L-glutamate + ATP = N-acetyl-L-glutamyl 5-phosphate + ADP. The protein operates within amino-acid biosynthesis; L-arginine biosynthesis; N(2)-acetyl-L-ornithine from L-glutamate: step 2/4. Catalyzes the ATP-dependent phosphorylation of N-acetyl-L-glutamate. This Synechococcus sp. (strain CC9311) protein is Acetylglutamate kinase.